The chain runs to 281 residues: Diaminopimelate epimerase (281 aa).

The substrate site is built by Asn-13, Gln-46, and Asn-66. The Proton donor role is filled by Cys-75. Substrate contacts are provided by residues 76–77 (GN), Asn-160, Asn-193, and 211–212 (ER). The Proton acceptor role is filled by Cys-220. A substrate-binding site is contributed by 221-222 (GT).

This sequence belongs to the diaminopimelate epimerase family. In terms of assembly, homodimer.

Its subcellular location is the cytoplasm. The catalysed reaction is (2S,6S)-2,6-diaminopimelate = meso-2,6-diaminopimelate. It participates in amino-acid biosynthesis; L-lysine biosynthesis via DAP pathway; DL-2,6-diaminopimelate from LL-2,6-diaminopimelate: step 1/1. Functionally, catalyzes the stereoinversion of LL-2,6-diaminopimelate (L,L-DAP) to meso-diaminopimelate (meso-DAP), a precursor of L-lysine and an essential component of the bacterial peptidoglycan. The chain is Diaminopimelate epimerase from Acinetobacter baumannii (strain ATCC 17978 / DSM 105126 / CIP 53.77 / LMG 1025 / NCDC KC755 / 5377).